We begin with the raw amino-acid sequence, 233 residues long: Membrane steroid-binding protein 2 (233 aa).

Residues 23-43 (AFFTVLALAFAVYQVVSGFFV) form a helical membrane-spanning segment. The Cytochrome b5 heme-binding domain maps to 70-167 (EITEEELKLY…SKYVKVGTIQ (98 aa)). Positions 70 to 167 (EITEEELKLY…SKYVKVGTIQ (98 aa)) are steroid-binding. 2 stretches are compositionally biased toward basic and acidic residues: residues 169 to 181 (KDGEGKESSEPSE) and 202 to 224 (THDETSRSTGEKIAETTEKKDVA). Residues 169–233 (KDGEGKESSE…ATDDDDAAKE (65 aa)) are disordered. Position 225 is a phosphothreonine (Thr-225).

This sequence belongs to the cytochrome b5 family. MAPR subfamily.

It localises to the cell membrane. This is Membrane steroid-binding protein 2 (MSBP2) from Arabidopsis thaliana (Mouse-ear cress).